Here is a 104-residue protein sequence, read N- to C-terminus: Synaptic plasticity regulator PANTS (104 aa).

A disordered region spans residues 58–104; sequence RRSAEAQADSLPPGPEGEPRVAGAGPNAVTGILTRNQGTERPHGDTR. The span at 95-104 shows a compositional bias: basic and acidic residues; the sequence is GTERPHGDTR.

This sequence belongs to the UPF0545 family. In terms of assembly, interacts with RTN4 isoform A/Nogo-A; the interaction results in enhanced RTN4-mediated inhibition of AMPA receptor clustering. Also interacts with NCAM1, RANBP2 and CCT8. Post-translationally, rapidly degraded by proteolysis following neuronal stimulation, resulting in increased AMPA receptor clustering.

The protein localises to the synapse. The protein resides in the synaptic cleft. Its function is as follows. Negatively regulates long-term potentiation and modulates adult synaptic plasticity. Stabilizes the interaction of RTN4 isoform A/Nogo-A with its receptors, inhibiting clustering of postsynaptic AMPA receptors at synaptic sites. Upon neuronal stimulation, degraded at synapses, reducing RTN4 signaling and allowing AMPA receptor clustering at individual synapses. This chain is Synaptic plasticity regulator PANTS, found in Bos taurus (Bovine).